Consider the following 816-residue polypeptide: Nitrogen permease regulator 3 (816 aa).

Residues 1–23 (MSSIARPPDPCLVAVVLIARSRA) form the signal peptide. Disordered stretches follow at residues 26 to 166 (RFVF…VPWE), 213 to 249 (WRKQ…GNDA), 262 to 287 (ALHP…PLDA), and 632 to 684 (SKGK…NRFR). Positions 44–56 (PKARRTSRSRSRQ) are enriched in basic residues. The segment covering 82-95 (SQNLNNSNNSNNNS) has biased composition (low complexity). The span at 101-127 (RRSSNFGLDDSNTLSENQRPGSISSSR) shows a compositional bias: polar residues. Positions 148–159 (DRQEDGSRESDG) are enriched in basic and acidic residues. Positions 214-224 (RKQRRKKKKKQ) are enriched in basic residues. Basic and acidic residues predominate over residues 225-238 (RAEWESGELGHNDA). Polar residues predominate over residues 268–282 (QRPSVPNSRSSQMSS). A compositionally biased stretch (basic and acidic residues) spans 641-654 (SDKEDSVNDERTEG). The segment covering 660–676 (ASSSSSSSLASHGSGDA) has biased composition (low complexity).

This sequence belongs to the NPR3 family.

Functionally, mediates inactivation of the TORC1 complex in response to amino acid starvation. Required for meiotic nuclear division. This is Nitrogen permease regulator 3 (npr3) from Emericella nidulans (strain FGSC A4 / ATCC 38163 / CBS 112.46 / NRRL 194 / M139) (Aspergillus nidulans).